We begin with the raw amino-acid sequence, 127 residues long: Protein ApaG (127 aa).

Positions 3–127 (NERKYSIKVE…FILSVPRVLH (125 aa)) constitute an ApaG domain.

In Nitrosomonas europaea (strain ATCC 19718 / CIP 103999 / KCTC 2705 / NBRC 14298), this protein is Protein ApaG.